Consider the following 316-residue polypeptide: Transaldolase (316 aa).

The active-site Schiff-base intermediate with substrate is the Lys-126.

The protein belongs to the transaldolase family. Type 1 subfamily. As to quaternary structure, homodimer.

It is found in the cytoplasm. The enzyme catalyses D-sedoheptulose 7-phosphate + D-glyceraldehyde 3-phosphate = D-erythrose 4-phosphate + beta-D-fructose 6-phosphate. It functions in the pathway carbohydrate degradation; pentose phosphate pathway; D-glyceraldehyde 3-phosphate and beta-D-fructose 6-phosphate from D-ribose 5-phosphate and D-xylulose 5-phosphate (non-oxidative stage): step 2/3. Its function is as follows. Transaldolase is important for the balance of metabolites in the pentose-phosphate pathway. This Methylibium petroleiphilum (strain ATCC BAA-1232 / LMG 22953 / PM1) protein is Transaldolase.